We begin with the raw amino-acid sequence, 150 residues long: Avidin-related protein 3 (150 aa).

A signal peptide spans 1–24; sequence MVHTTSPLLLLLLLSLALVAPSLS. Positions 26–147 constitute an Avidin-like domain; that stretch reads RKCSLTGKWT…GYNNFTRQRT (122 aa). The cysteines at positions 28 and 105 are disulfide-linked. Positions 36, 40, 57, 59, and 63 each coordinate biotin. Asn93 is a glycosylation site (N-linked (GlcNAc...) asparagine). Residues Ser95, Ser99, and Asn140 each contribute to the biotin site. Asn141 carries N-linked (GlcNAc...) asparagine glycosylation.

Belongs to the avidin/streptavidin family. In terms of assembly, homotetramer. Post-translationally, glycosylated.

Its subcellular location is the secreted. Forms a strong non-covalent specific complex with biotin. This Gallus gallus (Chicken) protein is Avidin-related protein 3 (AVR3).